A 410-amino-acid polypeptide reads, in one-letter code: Cysteine desulfurase IscS (410 aa).

Pyridoxal 5'-phosphate-binding positions include 80–81, N160, Q188, and 208–210; these read AT and SGH. K211 bears the N6-(pyridoxal phosphate)lysine mark. T248 contacts pyridoxal 5'-phosphate. C334 acts as the Cysteine persulfide intermediate in catalysis. C334 is a [2Fe-2S] cluster binding site.

Belongs to the class-V pyridoxal-phosphate-dependent aminotransferase family. NifS/IscS subfamily. As to quaternary structure, homodimer. Forms a heterotetramer with IscU, interacts with other sulfur acceptors. Pyridoxal 5'-phosphate is required as a cofactor.

The protein localises to the cytoplasm. It carries out the reaction (sulfur carrier)-H + L-cysteine = (sulfur carrier)-SH + L-alanine. Its pathway is cofactor biosynthesis; iron-sulfur cluster biosynthesis. Functionally, master enzyme that delivers sulfur to a number of partners involved in Fe-S cluster assembly, tRNA modification or cofactor biosynthesis. Catalyzes the removal of elemental sulfur atoms from cysteine to produce alanine. Functions as a sulfur delivery protein for Fe-S cluster synthesis onto IscU, an Fe-S scaffold assembly protein, as well as other S acceptor proteins. The sequence is that of Cysteine desulfurase IscS from Rickettsia massiliae (strain Mtu5).